A 294-amino-acid polypeptide reads, in one-letter code: MTTLTASPNRIAQYWALTKPRVTQLAVFCAVIGMFLATPELPSWKIVVAATIGIWLLAGAAFAINCLVEREIDSRMARTARRPMARGEITVPQTLVFSGLIGGAGMWVLYNFVNPLTMWLTFATFVGYAVIYTIILKPATPQNIVIGGLSGAMPPALGWAAVANDLPMQAWILVLIIFIWTPPHFWALALYRRDEYAKSGLPMLPVTHGTEFTQFHIWLYTIALVATTMLPFAVGMSGLIYLVSVAILDIIFVWYAWQVYRHYTDMIARKMFAYSIIYLSLLFAALLVDHYLRF.

9 helical membrane-spanning segments follow: residues V22–P42, I46–C66, I89–L109, L116–L136, N143–A163, A170–L190, F212–F232, V234–W254, and F272–L292.

It belongs to the UbiA prenyltransferase family. Protoheme IX farnesyltransferase subfamily.

It localises to the cell inner membrane. It carries out the reaction heme b + (2E,6E)-farnesyl diphosphate + H2O = Fe(II)-heme o + diphosphate. It participates in porphyrin-containing compound metabolism; heme O biosynthesis; heme O from protoheme: step 1/1. Functionally, converts heme B (protoheme IX) to heme O by substitution of the vinyl group on carbon 2 of heme B porphyrin ring with a hydroxyethyl farnesyl side group. The sequence is that of Protoheme IX farnesyltransferase from Janthinobacterium sp. (strain Marseille) (Minibacterium massiliensis).